The following is a 103-amino-acid chain: Cell division protein FtsB (103 aa).

At 1–3 (MGK) the chain is on the cytoplasmic side. A helical transmembrane segment spans residues 4–21 (LTLLLLALLVWLQYSLWF). At 22-103 (GKNGIHDYSR…RAQTAGQNNR (82 aa)) the chain is on the periplasmic side. A coiled-coil region spans residues 33–62 (NDDVVAQQATNAKLKARNDQLFAEIDDLNG).

The protein belongs to the FtsB family. Part of a complex composed of FtsB, FtsL and FtsQ.

The protein localises to the cell inner membrane. Its function is as follows. Essential cell division protein. May link together the upstream cell division proteins, which are predominantly cytoplasmic, with the downstream cell division proteins, which are predominantly periplasmic. The polypeptide is Cell division protein FtsB (Salmonella arizonae (strain ATCC BAA-731 / CDC346-86 / RSK2980)).